We begin with the raw amino-acid sequence, 400 residues long: S-adenosylmethionine synthase (400 aa).

136–141 (GQGSVD) contributes to the ATP binding site.

The protein belongs to the AdoMet synthase 2 family. It depends on Mg(2+) as a cofactor.

The enzyme catalyses L-methionine + ATP + H2O = S-adenosyl-L-methionine + phosphate + diphosphate. It participates in amino-acid biosynthesis; S-adenosyl-L-methionine biosynthesis; S-adenosyl-L-methionine from L-methionine: step 1/1. In terms of biological role, catalyzes the formation of S-adenosylmethionine from methionine and ATP. This chain is S-adenosylmethionine synthase, found in Thermoplasma volcanium (strain ATCC 51530 / DSM 4299 / JCM 9571 / NBRC 15438 / GSS1).